A 370-amino-acid chain; its full sequence is MSDKLNRPKVFFDISADGKPKGRVVFELYNDVVPKTAENFRALCTGEKGASESSGKQLHYKGSIFHRIIKDFMCQGGDFTHGSGIGGESIYGEKFEDENFQLTHDKPFLLSMANAGANTNGSQFFITTVPTPHLNGKHVVFGEVIQGKSIVRQLERCDKGENDKPVEDWIISDCGELPSDYVPVPTSVDDGTGDIYEEVMADDDNINVNDPESVFKAVTTLKDIGTKQLKDGNVAAAYEKYNKASGFLNDYFPEDLSEENLSKLHALKLSCYLNAALVALKLKDGKKTINAASNALEVEAIDDKSKTKALYRKGMGYLLAKDEESAQKSLEEALQLSPEDGAIIKGLQDVKTTIKARRDKQKKAMSKFFS.

Positions 11–176 (FFDISADGKP…EDWIISDCGE (166 aa)) constitute a PPIase cyclophilin-type domain. 3 TPR repeats span residues 218–251 (VTTL…LNDY), 269–302 (LSCY…EAID), and 307–340 (TKAL…SPED).

The protein belongs to the cyclophilin-type PPIase family. PPIase D subfamily.

Its subcellular location is the cytoplasm. The enzyme catalyses [protein]-peptidylproline (omega=180) = [protein]-peptidylproline (omega=0). Its function is as follows. PPIases accelerate the folding of proteins. It catalyzes the cis-trans isomerization of proline imidic peptide bonds in oligopeptides. The chain is Peptidyl-prolyl cis-trans isomerase D (CPR6) from Debaryomyces hansenii (strain ATCC 36239 / CBS 767 / BCRC 21394 / JCM 1990 / NBRC 0083 / IGC 2968) (Yeast).